A 1781-amino-acid chain; its full sequence is Chitin synthase 7 (1781 aa).

Asn-133, Asn-534, Asn-629, Asn-644, Asn-655, and Asn-660 each carry an N-linked (GlcNAc...) asparagine glycan. A run of 2 helical transmembrane segments spans residues Ala-741–Val-761 and Leu-777–Phe-797. 2 N-linked (GlcNAc...) asparagine glycosylation sites follow: Asn-889 and Asn-1011. Residues Leu-1048–Leu-1068 traverse the membrane as a helical segment. Residue Asn-1413 is glycosylated (N-linked (GlcNAc...) asparagine). Helical transmembrane passes span Leu-1444 to Leu-1464, Ile-1471 to Ile-1491, and Ile-1499 to Tyr-1519. The N-linked (GlcNAc...) asparagine glycan is linked to Asn-1526. A disordered region spans residues Gln-1677 to Gln-1712. Positions Arg-1690 to Arg-1702 are enriched in polar residues. The DEK-C domain occupies Gly-1723–Glu-1779.

It belongs to the chitin synthase family. Class V subfamily.

Its subcellular location is the cell membrane. The catalysed reaction is [(1-&gt;4)-N-acetyl-beta-D-glucosaminyl](n) + UDP-N-acetyl-alpha-D-glucosamine = [(1-&gt;4)-N-acetyl-beta-D-glucosaminyl](n+1) + UDP + H(+). Functionally, polymerizes chitin, a structural polymer of the cell wall and septum, by transferring the sugar moiety of UDP-GlcNAc to the non-reducing end of the growing chitin polymer. Shows additive effects in septum formation with CHS1, CHS2, CHS3A, CHS4, CHS5 and CHS6. Indispensable for perithecia formation and regulates conidiation. Plays an important role in the response to cell wall stress. Also required for hyphal growth and pathogenicity. The sequence is that of Chitin synthase 7 from Gibberella zeae (strain ATCC MYA-4620 / CBS 123657 / FGSC 9075 / NRRL 31084 / PH-1) (Wheat head blight fungus).